The sequence spans 207 residues: Cytochrome c biogenesis ATP-binding export protein CcmA (207 aa).

The region spanning 4–207 is the ABC transporter domain; sequence LEARELLCER…RISLTQTRAA (204 aa). 36 to 43 serves as a coordination point for ATP; the sequence is GSNGAGKT.

Belongs to the ABC transporter superfamily. CcmA exporter (TC 3.A.1.107) family. As to quaternary structure, the complex is composed of two ATP-binding proteins (CcmA) and two transmembrane proteins (CcmB).

It is found in the cell inner membrane. The catalysed reaction is heme b(in) + ATP + H2O = heme b(out) + ADP + phosphate + H(+). Part of the ABC transporter complex CcmAB involved in the biogenesis of c-type cytochromes; once thought to export heme, this seems not to be the case, but its exact role is uncertain. Responsible for energy coupling to the transport system. The polypeptide is Cytochrome c biogenesis ATP-binding export protein CcmA (Shigella sonnei (strain Ss046)).